The following is a 547-amino-acid chain: Chaperonin GroEL (547 aa).

ATP contacts are provided by residues 30–33 (TLGP), Lys51, 87–91 (DGTTT), Gly415, 479–481 (NAA), and Asp495.

Belongs to the chaperonin (HSP60) family. Forms a cylinder of 14 subunits composed of two heptameric rings stacked back-to-back. Interacts with the co-chaperonin GroES.

It is found in the cytoplasm. It catalyses the reaction ATP + H2O + a folded polypeptide = ADP + phosphate + an unfolded polypeptide.. Functionally, together with its co-chaperonin GroES, plays an essential role in assisting protein folding. The GroEL-GroES system forms a nano-cage that allows encapsulation of the non-native substrate proteins and provides a physical environment optimized to promote and accelerate protein folding. The chain is Chaperonin GroEL from Pseudomonas savastanoi pv. phaseolicola (strain 1448A / Race 6) (Pseudomonas syringae pv. phaseolicola (strain 1448A / Race 6)).